The chain runs to 607 residues: Replication factor C large subunit (607 aa).

55–62 (GPAGIGKT) contributes to the ATP binding site. The tract at residues 468–607 (EEEKPQKEGS…PKNQKTLFDF (140 aa)) is disordered. Residues 506 to 518 (TSEKKENSEKKEN) are compositionally biased toward basic and acidic residues. Positions 548-558 (SESVEQKTSSK) are enriched in polar residues.

It belongs to the activator 1 small subunits family. RfcL subfamily. In terms of assembly, heteromultimer composed of small subunits (RfcS) and large subunits (RfcL).

In terms of biological role, part of the RFC clamp loader complex which loads the PCNA sliding clamp onto DNA. The sequence is that of Replication factor C large subunit from Methanosarcina acetivorans (strain ATCC 35395 / DSM 2834 / JCM 12185 / C2A).